A 186-amino-acid chain; its full sequence is C-type lectin domain family 19 member A (186 aa).

An N-terminal signal peptide occupies residues 1 to 19 (MQRWTLWAAAFLTLHSAQA). Positions 47–179 (FKGHCYRFFP…CSRKFPFVCK (133 aa)) constitute a C-type lectin domain. N58 carries N-linked (GlcNAc...) asparagine glycosylation. Cystine bridges form between C68-C178 and C151-C170.

The protein localises to the secreted. In Homo sapiens (Human), this protein is C-type lectin domain family 19 member A.